Reading from the N-terminus, the 429-residue chain is Enolase (429 aa).

Gln162 serves as a coordination point for (2R)-2-phosphoglycerate. Glu204 functions as the Proton donor in the catalytic mechanism. Asp241, Glu286, and Asp313 together coordinate Mg(2+). Residues Lys338, Arg367, Ser368, and Lys389 each coordinate (2R)-2-phosphoglycerate. The active-site Proton acceptor is Lys338.

Belongs to the enolase family. The cofactor is Mg(2+).

The protein resides in the cytoplasm. Its subcellular location is the secreted. The protein localises to the cell surface. It catalyses the reaction (2R)-2-phosphoglycerate = phosphoenolpyruvate + H2O. Its pathway is carbohydrate degradation; glycolysis; pyruvate from D-glyceraldehyde 3-phosphate: step 4/5. In terms of biological role, catalyzes the reversible conversion of 2-phosphoglycerate (2-PG) into phosphoenolpyruvate (PEP). It is essential for the degradation of carbohydrates via glycolysis. The sequence is that of Enolase from Halalkalibacterium halodurans (strain ATCC BAA-125 / DSM 18197 / FERM 7344 / JCM 9153 / C-125) (Bacillus halodurans).